Here is a 273-residue protein sequence, read N- to C-terminus: Ribosomal RNA small subunit methyltransferase A (273 aa).

S-adenosyl-L-methionine-binding residues include Asn-23, Ile-25, Gly-50, Glu-72, Asp-97, and Asn-116.

The protein belongs to the class I-like SAM-binding methyltransferase superfamily. rRNA adenine N(6)-methyltransferase family. RsmA subfamily.

The protein localises to the cytoplasm. It catalyses the reaction adenosine(1518)/adenosine(1519) in 16S rRNA + 4 S-adenosyl-L-methionine = N(6)-dimethyladenosine(1518)/N(6)-dimethyladenosine(1519) in 16S rRNA + 4 S-adenosyl-L-homocysteine + 4 H(+). Its function is as follows. Specifically dimethylates two adjacent adenosines (A1518 and A1519) in the loop of a conserved hairpin near the 3'-end of 16S rRNA in the 30S particle. May play a critical role in biogenesis of 30S subunits. The sequence is that of Ribosomal RNA small subunit methyltransferase A from Rickettsia akari (strain Hartford).